Here is a 203-residue protein sequence, read N- to C-terminus: ATP-dependent Clp protease proteolytic subunit (203 aa).

Serine 107 serves as the catalytic Nucleophile. The active site involves histidine 132.

The protein belongs to the peptidase S14 family. As to quaternary structure, fourteen ClpP subunits assemble into 2 heptameric rings which stack back to back to give a disk-like structure with a central cavity, resembling the structure of eukaryotic proteasomes.

Its subcellular location is the cytoplasm. The catalysed reaction is Hydrolysis of proteins to small peptides in the presence of ATP and magnesium. alpha-casein is the usual test substrate. In the absence of ATP, only oligopeptides shorter than five residues are hydrolyzed (such as succinyl-Leu-Tyr-|-NHMec, and Leu-Tyr-Leu-|-Tyr-Trp, in which cleavage of the -Tyr-|-Leu- and -Tyr-|-Trp bonds also occurs).. Its function is as follows. Cleaves peptides in various proteins in a process that requires ATP hydrolysis. Has a chymotrypsin-like activity. Plays a major role in the degradation of misfolded proteins. The protein is ATP-dependent Clp protease proteolytic subunit of Shewanella piezotolerans (strain WP3 / JCM 13877).